A 308-amino-acid chain; its full sequence is tRNA dimethylallyltransferase (308 aa).

14-21 (GPTASGKT) provides a ligand contact to ATP. 16–21 (TASGKT) is a substrate binding site. 3 interaction with substrate tRNA regions span residues 39–42 (DSAL), 163–167 (QRLSR), and 244–249 (RCVGYR).

This sequence belongs to the IPP transferase family. As to quaternary structure, monomer. The cofactor is Mg(2+).

It catalyses the reaction adenosine(37) in tRNA + dimethylallyl diphosphate = N(6)-dimethylallyladenosine(37) in tRNA + diphosphate. In terms of biological role, catalyzes the transfer of a dimethylallyl group onto the adenine at position 37 in tRNAs that read codons beginning with uridine, leading to the formation of N6-(dimethylallyl)adenosine (i(6)A). The polypeptide is tRNA dimethylallyltransferase (Shewanella oneidensis (strain ATCC 700550 / JCM 31522 / CIP 106686 / LMG 19005 / NCIMB 14063 / MR-1)).